The chain runs to 225 residues: Transcriptional regulatory protein AfsQ1 (225 aa).

Positions 3 to 116 (SLLLIEDDDA…VLDARIRAVL (114 aa)) constitute a Response regulatory domain. Position 52 is a 4-aspartylphosphate (Asp-52). Residues 124-223 (TDSASFGSLV…VRGVGYRLDP (100 aa)) constitute a DNA-binding region (ompR/PhoB-type).

In terms of processing, phosphorylated by AfsQ2.

Its subcellular location is the cytoplasm. It localises to the nucleoid. Forms part of a two-component regulatory system AfsQ1/AfsQ2 involved in secondary metabolism. In Streptomyces coelicolor (strain ATCC BAA-471 / A3(2) / M145), this protein is Transcriptional regulatory protein AfsQ1.